A 327-amino-acid polypeptide reads, in one-letter code: GMP reductase (327 aa).

The Thioimidate intermediate role is filled by C175. Residue 204-227 (IIADGGIRTHGDVAKSIRFGATMV) participates in NADP(+) binding.

The protein belongs to the IMPDH/GMPR family. GuaC type 2 subfamily.

The enzyme catalyses IMP + NH4(+) + NADP(+) = GMP + NADPH + 2 H(+). Catalyzes the irreversible NADPH-dependent deamination of GMP to IMP. It functions in the conversion of nucleobase, nucleoside and nucleotide derivatives of G to A nucleotides, and in maintaining the intracellular balance of A and G nucleotides. The protein is GMP reductase of Bacillus thuringiensis subsp. konkukian (strain 97-27).